A 467-amino-acid chain; its full sequence is tRNA modification GTPase MnmE (467 aa).

3 residues coordinate (6S)-5-formyl-5,6,7,8-tetrahydrofolate: arginine 25, glutamate 87, and lysine 130. Residues 226 to 389 (GLSVVLAGQP…LRGELLRIAG (164 aa)) enclose the TrmE-type G domain. Asparagine 236 contributes to the K(+) binding site. Residues 236–241 (NVGKSS), 255–261 (TPIAGTT), and 280–283 (DTAG) contribute to the GTP site. Serine 240 is a Mg(2+) binding site. Residues threonine 255, isoleucine 257, and threonine 260 each coordinate K(+). Threonine 261 provides a ligand contact to Mg(2+). Position 467 (lysine 467) interacts with (6S)-5-formyl-5,6,7,8-tetrahydrofolate.

It belongs to the TRAFAC class TrmE-Era-EngA-EngB-Septin-like GTPase superfamily. TrmE GTPase family. As to quaternary structure, homodimer. Heterotetramer of two MnmE and two MnmG subunits. K(+) serves as cofactor.

It is found in the cytoplasm. Its function is as follows. Exhibits a very high intrinsic GTPase hydrolysis rate. Involved in the addition of a carboxymethylaminomethyl (cmnm) group at the wobble position (U34) of certain tRNAs, forming tRNA-cmnm(5)s(2)U34. The sequence is that of tRNA modification GTPase MnmE from Burkholderia mallei (strain NCTC 10247).